The chain runs to 381 residues: RING-H2 finger protein ATL1 (381 aa).

Residues 1–31 (MDLTDRRNPFNNLVFPPPPPPPSTTFTSPIF) form a disordered region. The helical transmembrane segment at 46–66 (IAVIGILATAFLLVSYYIFVI) threads the bilayer. Residues 134-176 (CSVCLNEFQEDEKLRIIPNCCHVFHIDCIDIWLQGNANCPLCR) form an RING-type; atypical zinc finger. Disordered regions lie at residues 249-269 (TSNE…PIKF) and 334-354 (RQIP…GNSR). Over residues 250 to 261 (SNEVSTGNSPKS) the composition is skewed to polar residues.

It belongs to the RING-type zinc finger family. ATL subfamily.

It is found in the membrane. The enzyme catalyses S-ubiquitinyl-[E2 ubiquitin-conjugating enzyme]-L-cysteine + [acceptor protein]-L-lysine = [E2 ubiquitin-conjugating enzyme]-L-cysteine + N(6)-ubiquitinyl-[acceptor protein]-L-lysine.. It functions in the pathway protein modification; protein ubiquitination. The protein is RING-H2 finger protein ATL1 (ATL1) of Arabidopsis thaliana (Mouse-ear cress).